The sequence spans 319 residues: tRNA uridine(34) hydroxylase (319 aa).

Positions Lys-127 to Glu-221 constitute a Rhodanese domain. Cys-181 (cysteine persulfide intermediate) is an active-site residue.

It belongs to the TrhO family.

The enzyme catalyses uridine(34) in tRNA + AH2 + O2 = 5-hydroxyuridine(34) in tRNA + A + H2O. Its function is as follows. Catalyzes oxygen-dependent 5-hydroxyuridine (ho5U) modification at position 34 in tRNAs. This Bacillus cereus (strain G9842) protein is tRNA uridine(34) hydroxylase.